Reading from the N-terminus, the 254-residue chain is Phosphatidylglycerol--prolipoprotein diacylglyceryl transferase (254 aa).

4 helical membrane passes run 11–31 (LAIRWYGVIISMGTALGLLLA), 49–69 (FLIAFPSAIIGARLYYVIFEF), 84–104 (QGGLAIHGGIIFGVLAVYIYL), and 109–129 (ESFFEYVDVAAPSIILGQAIG). Residue Arg130 coordinates a 1,2-diacyl-sn-glycero-3-phospho-(1'-sn-glycerol). 3 helical membrane-spanning segments follow: residues 169 to 189 (PTFLYESIWNFIICIFLVYLL), 196 to 216 (GIVFMAYIGLYSLGRFFIEGL), and 228 to 248 (VAQLISVLGIILSIFFIYNII).

The protein belongs to the Lgt family.

It localises to the cell membrane. The catalysed reaction is L-cysteinyl-[prolipoprotein] + a 1,2-diacyl-sn-glycero-3-phospho-(1'-sn-glycerol) = an S-1,2-diacyl-sn-glyceryl-L-cysteinyl-[prolipoprotein] + sn-glycerol 1-phosphate + H(+). Its pathway is protein modification; lipoprotein biosynthesis (diacylglyceryl transfer). Functionally, catalyzes the transfer of the diacylglyceryl group from phosphatidylglycerol to the sulfhydryl group of the N-terminal cysteine of a prolipoprotein, the first step in the formation of mature lipoproteins. This Clostridium botulinum (strain ATCC 19397 / Type A) protein is Phosphatidylglycerol--prolipoprotein diacylglyceryl transferase.